The primary structure comprises 129 residues: Lysozyme C (129 aa).

A C-type lysozyme domain is found at 1-129 (KVFGRCELAA…VHAWIRGCRL (129 aa)). Cystine bridges form between C6–C127, C30–C115, C64–C80, and C76–C94. Catalysis depends on residues E35 and D52.

This sequence belongs to the glycosyl hydrolase 22 family. As to quaternary structure, monomer.

The protein localises to the secreted. It catalyses the reaction Hydrolysis of (1-&gt;4)-beta-linkages between N-acetylmuramic acid and N-acetyl-D-glucosamine residues in a peptidoglycan and between N-acetyl-D-glucosamine residues in chitodextrins.. Functionally, lysozymes have primarily a bacteriolytic function; those in tissues and body fluids are associated with the monocyte-macrophage system and enhance the activity of immunoagents. This is Lysozyme C (LYZ) from Callipepla californica (California quail).